The sequence spans 112 residues: DNA-binding protein TK1278 (112 aa).

The protein belongs to the PDCD5 family.

This Thermococcus kodakarensis (strain ATCC BAA-918 / JCM 12380 / KOD1) (Pyrococcus kodakaraensis (strain KOD1)) protein is DNA-binding protein TK1278.